Here is a 257-residue protein sequence, read N- to C-terminus: Probable S-adenosylmethionine-dependent methyltransferase MSMEG_2350/MSMEI_2290 (257 aa).

Belongs to the methyltransferase superfamily.

Its function is as follows. Probable S-adenosylmethionine-dependent methyltransferase required for the 6-O-methylation of the polysaccharide backbone of 6-O-methylglucosyl lipopolysaccharides (MGLP). This Mycolicibacterium smegmatis (strain ATCC 700084 / mc(2)155) (Mycobacterium smegmatis) protein is Probable S-adenosylmethionine-dependent methyltransferase MSMEG_2350/MSMEI_2290.